Reading from the N-terminus, the 90-residue chain is Gene 56 protein (90 aa).

The Glutaredoxin domain maps to 1–90; the sequence is MRTMFTPITI…DYYTASETGL (90 aa). An intrachain disulfide couples C16 to C19.

This chain is Gene 56 protein (56), found in Mycobacterium phage D29 (Mycobacteriophage D29).